The primary structure comprises 369 residues: Chaperone protein DnaJ (369 aa).

One can recognise a J domain in the interval 5-69 (DYYDVLGISK…NKKAQYDRFG (65 aa)). Residues 131-213 (GTTKNVSVDI…CSGAGRVKAK (83 aa)) form a CR-type zinc finger. Zn(2+) is bound by residues Cys144, Cys147, Cys161, Cys164, Cys187, Cys190, Cys201, and Cys204. CXXCXGXG motif repeat units lie at residues 144 to 151 (CGHCHGSG), 161 to 168 (CSKCHGQG), 187 to 194 (CPQCQGEG), and 201 to 208 (CHVCSGAG).

Belongs to the DnaJ family. Homodimer. The cofactor is Zn(2+).

The protein localises to the cytoplasm. In terms of biological role, participates actively in the response to hyperosmotic and heat shock by preventing the aggregation of stress-denatured proteins and by disaggregating proteins, also in an autonomous, DnaK-independent fashion. Unfolded proteins bind initially to DnaJ; upon interaction with the DnaJ-bound protein, DnaK hydrolyzes its bound ATP, resulting in the formation of a stable complex. GrpE releases ADP from DnaK; ATP binding to DnaK triggers the release of the substrate protein, thus completing the reaction cycle. Several rounds of ATP-dependent interactions between DnaJ, DnaK and GrpE are required for fully efficient folding. Also involved, together with DnaK and GrpE, in the DNA replication of plasmids through activation of initiation proteins. The protein is Chaperone protein DnaJ of Acholeplasma laidlawii.